A 167-amino-acid polypeptide reads, in one-letter code: Ubiquitin-conjugating enzyme E2 14 (167 aa).

Position 2 is an N-acetylalanine (A2). A UBC core domain is found at 5 to 165; sequence QASLLLQKQL…VSRCVRRSQE (161 aa). Catalysis depends on C90, which acts as the Glycyl thioester intermediate.

This sequence belongs to the ubiquitin-conjugating enzyme family.

The catalysed reaction is S-ubiquitinyl-[E1 ubiquitin-activating enzyme]-L-cysteine + [E2 ubiquitin-conjugating enzyme]-L-cysteine = [E1 ubiquitin-activating enzyme]-L-cysteine + S-ubiquitinyl-[E2 ubiquitin-conjugating enzyme]-L-cysteine.. It functions in the pathway protein modification; protein ubiquitination. Functionally, accepts the ubiquitin from the E1 complex and catalyzes its covalent attachment to other proteins. Involved in the formation of multiubiquitin chains. Signal the protein for selective degradation. The chain is Ubiquitin-conjugating enzyme E2 14 (UBC14) from Arabidopsis thaliana (Mouse-ear cress).